Reading from the N-terminus, the 722-residue chain is Ataxin-7-like protein 2 (722 aa).

4 disordered regions span residues 106–228, 288–317, 347–403, and 531–600; these read LSKL…PPKT, NSRK…LPSS, SRAS…DCHY, and AITS…GCRG. Positions 181-191 are enriched in pro residues; that stretch reads GKPPMAPPSKE. One can recognise an SCA7 domain in the interval 230 to 297; sequence RKMARKECDL…NSRKGESPKE (68 aa). Over residues 290 to 311 the composition is skewed to basic and acidic residues; that stretch reads RKGESPKEKSPGRKEQVLERPS. The span at 541–556 shows a compositional bias: low complexity; the sequence is PSPSFSKLPPSKASKS. Positions 558 to 569 are enriched in basic and acidic residues; it reads KGKDGVEVEAPS. The residue at position 575 (serine 575) is a Phosphoserine.

This is Ataxin-7-like protein 2 (ATXN7L2) from Homo sapiens (Human).